The primary structure comprises 589 residues: Phenylalanine--tRNA ligase beta subunit (589 aa).

The region spanning 302 to 379 (LAYRKEMVRA…IAYGYSNIQM (78 aa)) is the B5 domain. 4 residues coordinate Mg(2+): D357, D363, E366, and D367.

This sequence belongs to the phenylalanyl-tRNA synthetase beta subunit family. Type 2 subfamily. As to quaternary structure, heterotetramer; dimer of two heterodimers formed by FARSA and FARSB. It depends on Mg(2+) as a cofactor.

The protein resides in the cytoplasm. The catalysed reaction is tRNA(Phe) + L-phenylalanine + ATP = L-phenylalanyl-tRNA(Phe) + AMP + diphosphate + H(+). The polypeptide is Phenylalanine--tRNA ligase beta subunit (FARSB) (Pongo abelii (Sumatran orangutan)).